A 598-amino-acid chain; its full sequence is Elongation factor 4 (598 aa).

One can recognise a tr-type G domain in the interval Asn-2 to Gln-184. GTP is bound by residues Asp-14 to Thr-19 and Asn-131 to Asp-134.

This sequence belongs to the TRAFAC class translation factor GTPase superfamily. Classic translation factor GTPase family. LepA subfamily.

It localises to the cell membrane. The catalysed reaction is GTP + H2O = GDP + phosphate + H(+). Required for accurate and efficient protein synthesis under certain stress conditions. May act as a fidelity factor of the translation reaction, by catalyzing a one-codon backward translocation of tRNAs on improperly translocated ribosomes. Back-translocation proceeds from a post-translocation (POST) complex to a pre-translocation (PRE) complex, thus giving elongation factor G a second chance to translocate the tRNAs correctly. Binds to ribosomes in a GTP-dependent manner. The polypeptide is Elongation factor 4 (Wolbachia pipientis subsp. Culex pipiens (strain wPip)).